The sequence spans 83 residues: Alpha-neurotoxin NTX-4 (83 aa).

The first 21 residues, M1–T21, serve as a signal peptide directing secretion. Intrachain disulfides connect C24–C45, C38–C62, C64–C75, and C76–C81.

This sequence belongs to the three-finger toxin family. Short-chain subfamily. Type I alpha-neurotoxin sub-subfamily. In terms of tissue distribution, expressed by the venom gland.

The protein localises to the secreted. Functionally, binds to muscle nicotinic acetylcholine receptor (nAChR) and inhibit acetylcholine from binding to the receptor, thereby impairing neuromuscular transmission. The sequence is that of Alpha-neurotoxin NTX-4 from Naja sputatrix (Malayan spitting cobra).